The chain runs to 169 residues: Calfumirin-1 (169 aa).

4 EF-hand domains span residues 6-41 (NIVEEVQKMLDTYDTNKDGEITKAEAVEYFKGKKAF), 42-77 (NPERSAIYLFQVYDKDNDGKITIKELAGDIDFDKAL), 93-128 (EVEEDIEAFILRHNKDDNTDITKDELIQGFKETGAK), and 129-164 (DPEKSANFILTEMDTNKDGTITVKELRVYYQKVQKL). Asp-19, Asn-21, Asp-23, Glu-25, Glu-30, Asp-55, Asp-57, Asp-59, Lys-61, Glu-66, Asp-108, Asn-110, Asp-112, Glu-117, Asp-142, Asn-144, Asp-146, Thr-148, and Glu-153 together coordinate Ca(2+).

In terms of biological role, may be involved in the phase-shift of cells from growth to differentiation. This chain is Calfumirin-1 (cafA), found in Dictyostelium discoideum (Social amoeba).